We begin with the raw amino-acid sequence, 183 residues long: MTTIVSVRRNNKVVIAGDGQVSLGNTVMKGNARKVRRLYNNQVLAGFAGGTADAFTLFERFESKLQMHQGHLTKAAVELAKDWRSDRALRKLEALLAVADETASLIITGNGDVVQPENDLIAIGSGGAYAQAAATALLENTDLDAREIAEKALNIAGDICVFTNHHHTVEELESTVELPKPTA.

Residue Thr-2 is part of the active site. Residues Gly-157, Cys-160, and Thr-163 each coordinate Na(+).

This sequence belongs to the peptidase T1B family. HslV subfamily. In terms of assembly, a double ring-shaped homohexamer of HslV is capped on each side by a ring-shaped HslU homohexamer. The assembly of the HslU/HslV complex is dependent on binding of ATP.

It localises to the cytoplasm. The enzyme catalyses ATP-dependent cleavage of peptide bonds with broad specificity.. With respect to regulation, allosterically activated by HslU binding. Functionally, protease subunit of a proteasome-like degradation complex believed to be a general protein degrading machinery. This chain is ATP-dependent protease subunit HslV, found in Vibrio campbellii (strain ATCC BAA-1116).